We begin with the raw amino-acid sequence, 386 residues long: Mannitol-1-phosphate 5-dehydrogenase (386 aa).

4–15 (AVHFGAGNIGRG) lines the NAD(+) pocket.

It belongs to the mannitol dehydrogenase family.

It carries out the reaction D-mannitol 1-phosphate + NAD(+) = beta-D-fructose 6-phosphate + NADH + H(+). The polypeptide is Mannitol-1-phosphate 5-dehydrogenase (Oceanobacillus iheyensis (strain DSM 14371 / CIP 107618 / JCM 11309 / KCTC 3954 / HTE831)).